Consider the following 104-residue polypeptide: DNA-directed RNA polymerase subunit omega (104 aa).

Belongs to the RNA polymerase subunit omega family. As to quaternary structure, the RNAP catalytic core consists of 2 alpha, 1 beta, 1 beta' and 1 omega subunit. When a sigma factor is associated with the core the holoenzyme is formed, which can initiate transcription.

The enzyme catalyses RNA(n) + a ribonucleoside 5'-triphosphate = RNA(n+1) + diphosphate. Its function is as follows. Promotes RNA polymerase assembly. Latches the N- and C-terminal regions of the beta' subunit thereby facilitating its interaction with the beta and alpha subunits. The protein is DNA-directed RNA polymerase subunit omega (rpoZ) of Streptococcus pyogenes serotype M1.